A 169-amino-acid polypeptide reads, in one-letter code: Ribosome maturation factor RimP (169 aa).

This sequence belongs to the RimP family.

The protein localises to the cytoplasm. In terms of biological role, required for maturation of 30S ribosomal subunits. The chain is Ribosome maturation factor RimP from Pseudomonas putida (strain W619).